The primary structure comprises 715 residues: Photosystem I P700 chlorophyll a apoprotein A1 (715 aa).

The next 8 helical transmembrane spans lie at 60-83 (VFSAHFGQLAIIFIWLSGMYFHGA), 146-169 (LYSTAIGGLIFAALMLFAGWFHYH), 185-209 (LNHHLAGLLGLGSLSWAGHQVHVSL), 281-299 (TVHHHLAIAVLFLIAGHMY), 336-359 (WHAQLALNLAMLGSLTIIVAHHMY), 375-401 (LSLFTHHMWIGGFLVVGAAAHAAIFMV), 423-445 (AIISHLNWACIFLGFHSFGLYIH), and 521-539 (FLVHHIHAFTIHVTVLILL). 2 residues coordinate [4Fe-4S] cluster: cysteine 563 and cysteine 572. The next 2 membrane-spanning stretches (helical) occupy residues 579-600 (HVFLGLFWMYNAISVVIFHFSW) and 654-676 (LSAYGLLFLGAHFVWAFSLMFLF). Histidine 665 contacts chlorophyll a'. Chlorophyll a-binding residues include methionine 673 and tyrosine 681. Tryptophan 682 contacts phylloquinone. Residues 714 to 715 (AE) form a helical membrane-spanning segment.

Belongs to the PsaA/PsaB family. The PsaA/B heterodimer binds the P700 chlorophyll special pair and subsequent electron acceptors. PSI consists of a core antenna complex that captures photons, and an electron transfer chain that converts photonic excitation into a charge separation. The eukaryotic PSI reaction center is composed of at least 11 subunits. The cofactor is P700 is a chlorophyll a/chlorophyll a' dimer, A0 is one or more chlorophyll a, A1 is one or both phylloquinones and FX is a shared 4Fe-4S iron-sulfur center..

Its subcellular location is the plastid. It localises to the chloroplast thylakoid membrane. The enzyme catalyses reduced [plastocyanin] + hnu + oxidized [2Fe-2S]-[ferredoxin] = oxidized [plastocyanin] + reduced [2Fe-2S]-[ferredoxin]. Functionally, psaA and PsaB bind P700, the primary electron donor of photosystem I (PSI), as well as the electron acceptors A0, A1 and FX. PSI is a plastocyanin-ferredoxin oxidoreductase, converting photonic excitation into a charge separation, which transfers an electron from the donor P700 chlorophyll pair to the spectroscopically characterized acceptors A0, A1, FX, FA and FB in turn. Oxidized P700 is reduced on the lumenal side of the thylakoid membrane by plastocyanin. This is Photosystem I P700 chlorophyll a apoprotein A1 from Phlegmariurus squarrosus (Rock tassel fern).